We begin with the raw amino-acid sequence, 487 residues long: NAD(+)--arginine ADP-ribosyltransferase EFV (487 aa).

A coiled-coil region spans residues 2–51 (SQLNKWQKELQALQKANYQETDNQLFNVYRQSLIDIKKRLKVYTENAESL). Residues 315–487 (LDFFGQSDLQ…DNILEVTILG (173 aa)) form the TR mART core domain. NAD(+)-binding positions include 346 to 358 (TSDA…KILR) and 394 to 400 (RGVSANE). Active-site residues include arginine 394, serine 415, and glutamate 463. Position 463 (glutamate 463) interacts with NAD(+).

It localises to the secreted. The enzyme catalyses L-arginyl-[protein] + NAD(+) = N(omega)-(ADP-D-ribosyl)-L-arginyl-[protein] + nicotinamide + H(+). In terms of biological role, a probable mono(ADP-ribosyl)transferase, it may ADP-ribosylate Arg in target protein(s). Upon expression in yeast cells causes cell death. The sequence is that of NAD(+)--arginine ADP-ribosyltransferase EFV from Enterococcus faecalis (strain ATCC 700802 / V583).